The primary structure comprises 2112 residues: Phenolphthiocerol synthesis polyketide synthase type I Pks15/1 (2112 aa).

Positions 46–469 (TEPVAVVGIG…GTNAHLILEE (424 aa)) constitute a Ketosynthase family 3 (KS3) domain. Active-site for beta-ketoacyl synthase activity residues include cysteine 216, histidine 351, and histidine 391. Residues 579–893 (TVVVFPGQGA…GQVFTTGVPV (315 aa)) form an acyltransferase region. Catalysis depends on serine 670, which acts as the For acyltransferase activity. The N-terminal hotdog fold stretch occupies residues 941–1063 (HALLGAVVER…GMLGVAAAET (123 aa)). Positions 941–1101 (HALLGAVVER…YAYGPAFQGL (161 aa)) are dehydratase. The PKS/mFAS DH domain maps to 941–1215 (HALLGAVVER…TRPITAEQLR (275 aa)). Histidine 973 (proton acceptor; for dehydratase activity) is an active-site residue. The interval 1075–1215 (AESVDISDGY…TRPITAEQLR (141 aa)) is C-terminal hotdog fold. The active-site Proton donor; for dehydratase activity is aspartate 1136. The tract at residues 1406–1711 (GTLEDLVIQP…QARHIGKVVL (306 aa)) is enoylreductase. NADP(+)-binding positions include 1536–1553 (VLIH…VQLA) and 1725–1740 (TVVI…GVLA). The segment at 1724–1905 (GTVVITGATG…SLAWGLWEQP (182 aa)) is beta-ketoacyl reductase. The Carrier domain occupies 2010-2085 (ELLVGLVCLQ…AVAEYVAQQM (76 aa)). Serine 2045 bears the O-(pantetheine 4'-phosphoryl)serine mark. Positions 2084 to 2100 (QMSGSRPTESGDPTSQV) are enriched in polar residues. The interval 2084–2112 (QMSGSRPTESGDPTSQVVEPAAAEVSVHA) is disordered.

The protein belongs to the thiolase-like superfamily. Beta-ketoacyl-ACP synthases family. Pantetheine 4'-phosphate is required as a cofactor.

The enzyme catalyses a fatty acyl-[ACP] + malonyl-[ACP] + H(+) = a 3-oxoacyl-[ACP] + holo-[ACP] + CO2. It functions in the pathway lipid metabolism; fatty acid biosynthesis. Its function is as follows. Catalyzes the elongation by iterative transfer of p-hydroxybenzoyl group from FadD22 (pHBA-S-FAdD22) to form p-hydroxyphenylalkanoate (pHPA) intermediates during phenolphthiocerol (PPOL) biosynthesis. PPOL is an important intermediate in the biosynthesis of phenolic glycolipid (mycosid B). The chain is Phenolphthiocerol synthesis polyketide synthase type I Pks15/1 (pks15/1) from Mycobacterium bovis (strain ATCC BAA-935 / AF2122/97).